A 662-amino-acid chain; its full sequence is Acetyl-coenzyme A synthetase (662 aa).

Residues arginine 197 to lysine 200 and threonine 317 contribute to the CoA site. ATP-binding positions include glycine 393–proline 395, aspartate 417–threonine 422, aspartate 510, and arginine 525. Residue serine 533 participates in CoA binding. Arginine 536 lines the ATP pocket. Mg(2+) contacts are provided by histidine 549 and valine 552. N6-acetyllysine is present on lysine 623.

The protein belongs to the ATP-dependent AMP-binding enzyme family. Mg(2+) serves as cofactor. In terms of processing, acetylated. Deacetylation by the SIR2-homolog deacetylase activates the enzyme.

It catalyses the reaction acetate + ATP + CoA = acetyl-CoA + AMP + diphosphate. Catalyzes the conversion of acetate into acetyl-CoA (AcCoA), an essential intermediate at the junction of anabolic and catabolic pathways. AcsA undergoes a two-step reaction. In the first half reaction, AcsA combines acetate with ATP to form acetyl-adenylate (AcAMP) intermediate. In the second half reaction, it can then transfer the acetyl group from AcAMP to the sulfhydryl group of CoA, forming the product AcCoA. In Helicobacter acinonychis (strain Sheeba), this protein is Acetyl-coenzyme A synthetase.